We begin with the raw amino-acid sequence, 272 residues long: Shikimate dehydrogenase (NADP(+)) (272 aa).

Residues 14-16 (SKS) and Thr-61 contribute to the shikimate site. Catalysis depends on Lys-65, which acts as the Proton acceptor. Shikimate is bound by residues Asn-86 and Asp-102. NADP(+)-binding positions include 126–130 (GAGGA), 149–154 (NRTFSK), Ser-189, and Met-213. Tyr-215 is a binding site for shikimate. Gly-238 lines the NADP(+) pocket.

It belongs to the shikimate dehydrogenase family. As to quaternary structure, homodimer.

It carries out the reaction shikimate + NADP(+) = 3-dehydroshikimate + NADPH + H(+). It functions in the pathway metabolic intermediate biosynthesis; chorismate biosynthesis; chorismate from D-erythrose 4-phosphate and phosphoenolpyruvate: step 4/7. In terms of biological role, involved in the biosynthesis of the chorismate, which leads to the biosynthesis of aromatic amino acids. Catalyzes the reversible NADPH linked reduction of 3-dehydroshikimate (DHSA) to yield shikimate (SA). The sequence is that of Shikimate dehydrogenase (NADP(+)) from Haemophilus influenzae (strain ATCC 51907 / DSM 11121 / KW20 / Rd).